The chain runs to 568 residues: Zinc finger protein 76 (568 aa).

K24 participates in a covalent cross-link: Glycyl lysine isopeptide (Lys-Gly) (interchain with G-Cter in SUMO2). 3 tandem repeats follow at residues 34–45, 62–73, and 88–99. The segment at 34–99 is 3 X 12 AA approximate repeats; the sequence is IQLEDGTTAY…LEDGSTAYIH (66 aa). C2H2-type zinc fingers lie at residues 165-189, 195-219, 225-249, 255-279, 285-309, 315-339, and 345-368; these read FRCGYKGCGRLYTTAHHLKVHERAH, YRCDFPSCGKAFATGYGLKSHVRTH, YKCPEELCSKAFKTSGDLQKHVRTH, FRCPFEGCGRSFTTSNIRKVHVRTH, YTCPEPHCGRGFTSATNYKNHVRIH, YVCTVPGCGKRFTEYSSLYKHHVVH, and YTCSSCGKTYRQTSTLAMHKRSAH. Residues 365-401 form a disordered region; sequence RSAHGELEATEESEQALYEQQQLEAASAAEESPSPKP. The segment covering 379-396 has biased composition (low complexity); the sequence is QALYEQQQLEAASAAEES.

It belongs to the krueppel C2H2-type zinc-finger protein family.

The protein localises to the nucleus. In terms of biological role, may be involved in transcriptional regulation. The sequence is that of Zinc finger protein 76 (Znf76) from Rattus norvegicus (Rat).